The chain runs to 1426 residues: A disintegrin and metalloproteinase with thrombospondin motifs 13 (1426 aa).

The first 33 residues, 1–33 (MSQLCLWLTCQPCYAVSVRGILTGAIFILGCWG), serve as a signal peptide directing secretion. The propeptide occupies 34-76 (LSDFQKSLLQDLEPKDVSSYFGHHAAPFTGHPPSHLQRLRRRR). The 218-residue stretch at 74–291 (RRRTLEDILH…GQMHCFQDPP (218 aa)) folds into the Peptidase M12B domain. Glu85 is a Ca(2+) binding site. N-linked (GlcNAc...) asparagine glycosylation is found at Asn144 and Asn148. Intrachain disulfides connect Cys157-Cys210, Cys204-Cys286, and Cys246-Cys270. Ca(2+) is bound by residues Asp175, Asp184, Glu186, Asp189, and Glu214. His226 contacts Zn(2+). Glu227 is a catalytic residue. Residues His230 and His236 each contribute to the Zn(2+) site. The Ca(2+) site is built by Thr281 and Asp289. Residues 295-388 (SGLTRHQLMA…LAELAPVAAV (94 aa)) form the Disintegrin domain. 11 cysteine pairs are disulfide-bonded: Cys316–Cys342, Cys327–Cys352, Cys337–Cys371, Cys365–Cys376, Cys401–Cys438, Cys405–Cys443, Cys416–Cys428, Cys488–Cys527, Cys513–Cys532, Cys537–Cys553, and Cys550–Cys560. The TSP type-1 1 domain maps to 389 to 444 (HGHWSSWGPHSPCSRSCGGGVITRRRWCNNPRPAFGGRACVGEDLQAKMCNTQACE). A cysteine-rich region spans residues 445 to 561 (KTQLEFMSEQ…VCGGDNSTCS (117 aa)). The Cell attachment site signature appears at 503–505 (RGD). Residues 556–685 (DNSTCSSRNG…PDITFSYFQL (130 aa)) form a spacer region. Asn557, Asn564, Asn584, and Asn619 each carry an N-linked (GlcNAc...) asparagine glycan. TSP type-1 domains follow at residues 687–746 (QQAA…VSAP), 747–810 (CSPY…QPCP), 808–871 (PCPT…SLCS), 904–957 (WTPL…RARP), 958–1019 (CPAR…EPCP), 1020–1078 (ARWK…IADC), and 1079–1137 (AFRW…GPCA). 2 O-linked (Fuc...) serine glycosylation sites follow: Ser703 and Ser762. The N-linked (GlcNAc...) asparagine glycan is linked to Asn834. The O-linked (Fuc...) serine glycan is linked to Ser914. A glycan (O-linked (Fuc...) threonine) is linked at Thr973. O-linked (Fuc...) serine glycosylation occurs at Ser1033. Asn1057 carries an N-linked (GlcNAc...) asparagine glycan. An O-linked (Fuc...) serine glycan is attached at Ser1093. CUB domains lie at 1195–1302 (ACGR…FYKE) and 1293–1426 (QPAP…LALS).

Requires Zn(2+) as cofactor. Ca(2+) serves as cofactor. In terms of processing, the precursor is processed by a furin endopeptidase which cleaves off the pro-domain. O-glycosylated. O-fucosylated by POFUT2 on a serine or a threonine residue found within the consensus sequence C1-X(2)-(S/T)-C2-G of the TSP type-1 repeat domains where C1 and C2 are the first and second cysteine residue of the repeat, respectively. Fucosylated repeats can then be further glycosylated by the addition of a beta-1,3-glucose residue by the glucosyltransferase, B3GALTL. Fucosylation mediates the efficient secretion of ADAMTS13. May also be C-glycosylated on tryptophan residues within the consensus sequence W-X-X-W of the TPRs, and also N-glycosylated. These other glycosylations can also facilitate secretion. As to expression, plasma. Expression is consistently high in liver, medium in lung and spleen, low in skeletal muscle and undetectable in heart, brain, kidney and testis.

It is found in the secreted. The enzyme catalyses The enzyme cleaves the von Willebrand factor at bond 842-Tyr-|-Met-843 within the A2 domain.. Its activity is regulated as follows. Zinc and calcium ions cooperatively modulate enzyme activity. The cleavage of the pro-domain is not required for protease activity. Dependence on calcium for proteolytic activity is mediated by the high affinity site. Its function is as follows. Cleaves the vWF multimers in plasma into smaller forms thereby controlling vWF-mediated platelet thrombus formation. This Mus musculus (Mouse) protein is A disintegrin and metalloproteinase with thrombospondin motifs 13 (Adamts13).